We begin with the raw amino-acid sequence, 962 residues long: MVPGEVHMSDTPSGPHPIIPRTIRLAAIPILLCWLGFTVFVSVAVPPLEAIGETRAVAVAPDDAQSMRAMRRAGKVFNEFDSNSIAMVVLESDQPLGEKAHRYYDHLVDTLVLDQSHIQHIQDFWRDPLTAAGAVSADGKAAYVQLYLAGNMGEALANESVEAVRKIVANSTPPEGIRTYVTGPAALFADQIAAGDRSMKLITGLTFAVITVLLLLVYRSIATTLLILPMVFIGLGATRGTIAFLGYHGMVGLSTFVVNILTALAIAAGTDYAIFLVGRYQEARHIGQNREASFYTMYRGTANVILGSGLTIAGATYCLSFARLTLFHTMGPPLAIGMLVSVAAALTLAPAIIAIAGRFGLLDPKRRLKTRGWRRVGTAVVRWPGPILATSVALALVGLLALPGYRPGYNDRYYLRAGTPVNRGYAAADRHFGPARMNPEMLLVESDQDMRNPAGMLVIDKIAKEVLHVSGVERVQAITRPQGVPLEHASIPFQISMMGATQTMSLPYMRERMADMLTMSDEMLVAINSMEQMLDLVQQLNDVTHEMAATTREIKATTSELRDHLADIDDFVRPLRSYFYWEHHCFDIPLCSATRSLFDTLDGVDTLTDQLRALTDDMNKMEALTPQFLALLPPMITTMKTMRTMMLTMRSTISGVQDQMADMQDHATAMGQAFDTAKSGDSFYLPPEAFDNAEFQQGMKLFLSPNGKAVRFVISHESDPASTEGIDRIEAIRAATKDAIKATPLQGAKIYIGGTAATYQDIRDGTKYDILIVGIAAVCLVFIVMLMITQSLIASLVIVGTVLLSLGTAFGLSVLIWQHFVGLQVHWTIVAMSVIVLLAVGSDYNLLLVSRFKEEVGAGLKTGIIRAMAGTGAVVTSAGLVFAFTMASMAVSELRVIGQVGTTIGLGLLFDTLVVRSFMTPSIAALLGRWFWWPNMIHSRPTVPEAHTRQGARRIQPHLHRG.

The next 12 membrane-spanning stretches (helical) occupy residues 25–45 (LAAI…SVAV), 201–223 (LITG…SIAT), 225–247 (LLIL…FLGY), 256–276 (FVVN…AIFL), 302–322 (ANVI…LSFA), 335–355 (AIGM…IIAI), 383–403 (WPGP…LALP), 768–788 (YDIL…MLMI), 796–816 (LVIV…SVLI), 820–840 (FVGL…LLAV), 867–887 (AMAG…FTMA), and 895–915 (RVIG…TLVV).

This sequence belongs to the resistance-nodulation-cell division (RND) (TC 2.A.6) family. MmpL subfamily.

It is found in the cell membrane. This is Probable transport protein MmpL9 (mmpL9) from Mycobacterium tuberculosis (strain ATCC 25618 / H37Rv).